The following is a 149-amino-acid chain: Glutamate mutase sigma subunit (149 aa).

The B12-binding domain occupies 3-140 (KATLVIGVIG…AHDINQRHDV (138 aa)). Adenosylcob(III)alamin is bound by residues 13 to 17 (ADCHA), histidine 16, 61 to 63 (SSI), and 93 to 97 (NLVVG).

Belongs to the methylaspartate mutase GlmS subunit family. In terms of assembly, heterotetramer composed of 2 epsilon subunits (GlmE) and 2 sigma subunits (GlmS). GlmE exists as a homodimer and GlmS as a monomer. Adenosylcob(III)alamin serves as cofactor.

It carries out the reaction (2S,3S)-3-methyl-L-aspartate = L-glutamate. It functions in the pathway amino-acid degradation; L-glutamate degradation via mesaconate pathway; acetate and pyruvate from L-glutamate: step 1/4. Its function is as follows. Catalyzes the carbon skeleton rearrangement of L-glutamate to L-threo-3-methylaspartate ((2S,3S)-3-methylaspartate). In Escherichia coli O157:H7, this protein is Glutamate mutase sigma subunit.